Here is a 156-residue protein sequence, read N- to C-terminus: Small ribosomal subunit protein uS7 (156 aa).

This sequence belongs to the universal ribosomal protein uS7 family. As to quaternary structure, part of the 30S ribosomal subunit. Contacts proteins S9 and S11.

Its function is as follows. One of the primary rRNA binding proteins, it binds directly to 16S rRNA where it nucleates assembly of the head domain of the 30S subunit. Is located at the subunit interface close to the decoding center, probably blocks exit of the E-site tRNA. The protein is Small ribosomal subunit protein uS7 of Methylorubrum populi (strain ATCC BAA-705 / NCIMB 13946 / BJ001) (Methylobacterium populi).